Reading from the N-terminus, the 276-residue chain is Release factor glutamine methyltransferase (276 aa).

S-adenosyl-L-methionine is bound by residues 116–120, Asp139, Trp167, and Asn182; that span reads GTGTG. Residue 182-185 participates in substrate binding; that stretch reads NPPY.

It belongs to the protein N5-glutamine methyltransferase family. PrmC subfamily.

It carries out the reaction L-glutaminyl-[peptide chain release factor] + S-adenosyl-L-methionine = N(5)-methyl-L-glutaminyl-[peptide chain release factor] + S-adenosyl-L-homocysteine + H(+). Its function is as follows. Methylates the class 1 translation termination release factors RF1/PrfA and RF2/PrfB on the glutamine residue of the universally conserved GGQ motif. This is Release factor glutamine methyltransferase from Pseudomonas aeruginosa (strain ATCC 15692 / DSM 22644 / CIP 104116 / JCM 14847 / LMG 12228 / 1C / PRS 101 / PAO1).